The chain runs to 503 residues: MLNIRPDEISNVIRQQIDKYEQEIQVANIGTVLQVGDGIARVYGLDEVMAGELLEFEDQTIGIALNLESDNVGVVLMGEGRNILEGSSVKATGKIAQIPVGDAFLGRVVDPLARPIDAKGLPNSSGTRLIESYAPGIIGRQSVCEPLQTGITAIDSMIPIGRGQRELIIGDRQTGKTAVALDTIINQKGQDVVCIYVAIGQKASSVAQVVSTLQDESALDYTIVVASNADDPATLQYIAPYTGAALAEYFMYKGKATLVVYDDLTKQAQAYRQMSLLLRRPPGREAYPGDVFYLHSRLLERAAKLNSELGGGSMTALPIIETQAGDVSAYIPTNVISITDGQIFLSGDLFNSGIRPAINVGISVSRVGSAAQIKAMKQVAGKLKLELAQFAELEAFSQFASDLDKATQNQLSRGQRLREILKQAQNSPIPVEEQTAIIYTGINGYLDDINLSQVQEFIEALREDLRNSKPEFGESIRTTKKLSAEAEELLKQSIEDVKQAFSV.

170 to 177 (GDRQTGKT) is an ATP binding site.

It belongs to the ATPase alpha/beta chains family. F-type ATPases have 2 components, CF(1) - the catalytic core - and CF(0) - the membrane proton channel. CF(1) has five subunits: alpha(3), beta(3), gamma(1), delta(1), epsilon(1). CF(0) has four main subunits: a, b, b' and c.

The protein localises to the plastid. It is found in the chloroplast thylakoid membrane. It carries out the reaction ATP + H2O + 4 H(+)(in) = ADP + phosphate + 5 H(+)(out). Its function is as follows. Produces ATP from ADP in the presence of a proton gradient across the membrane. The alpha chain is a regulatory subunit. This is ATP synthase subunit alpha, chloroplastic from Gracilaria tenuistipitata var. liui (Red alga).